We begin with the raw amino-acid sequence, 414 residues long: Cytochrome P450 CYP105Q4 (414 aa).

The span at 1-12 (MSDTLASPSPET) shows a compositional bias: polar residues. Positions 1–21 (MSDTLASPSPETASGIPDYPM) are disordered. Heme-binding residues include H108, Q302, R304, H361, and C363.

Belongs to the cytochrome P450 family. Requires heme as cofactor.

Its function is as follows. Can bind oleic-acid derivatives, amphotericin B like precursors and a variety of nitrogen ligand donors. This Mycobacterium marinum (strain ATCC BAA-535 / M) protein is Cytochrome P450 CYP105Q4.